The sequence spans 232 residues: 7-cyano-7-deazaguanine synthase (232 aa).

7–17 is a binding site for ATP; sequence CSGGLDSVSLA. Cysteine 185, cysteine 193, cysteine 196, and cysteine 199 together coordinate Zn(2+).

This sequence belongs to the QueC family. Zn(2+) serves as cofactor.

The enzyme catalyses 7-carboxy-7-deazaguanine + NH4(+) + ATP = 7-cyano-7-deazaguanine + ADP + phosphate + H2O + H(+). Its pathway is purine metabolism; 7-cyano-7-deazaguanine biosynthesis. Functionally, catalyzes the ATP-dependent conversion of 7-carboxy-7-deazaguanine (CDG) to 7-cyano-7-deazaguanine (preQ(0)). The polypeptide is 7-cyano-7-deazaguanine synthase (Brucella anthropi (strain ATCC 49188 / DSM 6882 / CCUG 24695 / JCM 21032 / LMG 3331 / NBRC 15819 / NCTC 12168 / Alc 37) (Ochrobactrum anthropi)).